The chain runs to 350 residues: Aldo-keto reductase 1B (350 aa).

The active-site Proton donor is the Y84. H146 contacts substrate. Residue 244–306 (SPLGSPNRPW…SVTKDRIESN (63 aa)) participates in NADP(+) binding.

The protein belongs to the aldo/keto reductase family.

It localises to the cytoplasm. It carries out the reaction an alditol + NADP(+) = an aldose + NADPH + H(+). The enzyme catalyses all-trans-retinol + NADP(+) = all-trans-retinal + NADPH + H(+). The catalysed reaction is 9-cis-retinol + NADP(+) = 9-cis-retinal + NADPH + H(+). It catalyses the reaction 13-cis-retinol + NADP(+) = 13-cis-retinal + NADPH + H(+). It carries out the reaction glycerol + NADP(+) = D-glyceraldehyde + NADPH + H(+). The enzyme catalyses glycerol + NADP(+) = L-glyceraldehyde + NADPH + H(+). The catalysed reaction is prenol + NADP(+) = 3-methyl-2-butenal + NADPH + H(+). It catalyses the reaction (E)-hex-2-en-1-ol + NADP(+) = (E)-hex-2-enal + NADPH + H(+). It carries out the reaction (E,E)-2,4-hexadien-1-ol + NADP(+) = (E,E)-2,4-hexadienal + NADPH + H(+). The enzyme catalyses a 4-hydroxynonen-1-ol + NADP(+) = a 4-hydroxynonenal + NADPH + H(+). The catalysed reaction is prostaglandin F2alpha + NADP(+) = prostaglandin H2 + NADPH + H(+). It catalyses the reaction allyl alcohol + NADP(+) = acrolein + NADPH + H(+). It carries out the reaction pyridine 3-methanol + NADP(+) = pyridine-3-carbaldehyde + NADPH + H(+). The enzyme catalyses 1-hexadecanoyl-2-(5-oxopentanoyl)-sn-glycero-3-phosphocholine + NADPH + H(+) = 1-hexadecanoyl-2-(5-hydroxypentanoyl)-sn-glycero-3-phosphocholine + NADP(+). The catalysed reaction is 1-hexadecanoyl-2-(7-oxoheptanoyl)-sn-glycero-3-phosphocholine + NADPH + H(+) = 1-hexadecanoyl-2-(7-hydroxyheptanoyl)-sn-glycero-3-phosphocholine + NADP(+). It catalyses the reaction 1-hexadecanoyl-2-(9-oxononanoyl)-sn-glycero-3-phosphocholine + NADPH + H(+) = 1-hexadecanoyl-2-(9-hydroxynonanoyl)-sn-glycero-3-phosphocholine + NADP(+). It carries out the reaction 1-hexadecanoyl-2-(5-oxopentanoyl)-sn-glycero-3-phosphoethanolamine + NADPH + H(+) = 1-hexadecanoyl-2-(5-hydroxypentanoyl)-sn-glycero-3-phosphoethanolamine + NADP(+). Catalyzes the NADPH-dependent reduction of a wide variety of carbonyl-containing compounds to their corresponding alcohols. Displays enzymatic activity towards endogenous metabolites such as aromatic and aliphatic aldehydes, ketones, monosaccharides, bile acids and xenobiotics substrates. Key enzyme in the polyol pathway, catalyzes reduction of glucose to sorbitol during hyperglycemia. Reduces steroids and their derivatives and prostaglandins. Through production of prostaglandin F2alpha may regulate the activity of non-muscle myosin II in an autocrine or paracrine fashion; influences border cell and nurse cell stiffness to facilitate border cell cluster migration. Also regulates the cell surface localization of integrins in an autocrine or paracrine fashion; influences border cell adhesion to maintain border cell cluster morphology. In hemocytes, probably contributes to production of sugar alcohols in the hemolymph, which act as alarmins involved in gut-fat body innate immunological communication (GFIC); leads to activation of the imd/Relish signaling pathway in the fat body. This Drosophila melanogaster (Fruit fly) protein is Aldo-keto reductase 1B.